Here is a 518-residue protein sequence, read N- to C-terminus: Protein nucleotidyltransferase YdiU (518 aa).

The segment covering Met1–Leu10 has biased composition (basic and acidic residues). A disordered region spans residues Met1 to Arg23. ATP is bound by residues Gly100, Gly102, Arg103, Lys123, Asp135, Gly136, Arg193, and Arg200. The active-site Proton acceptor is Asp270. Mg(2+) is bound by residues Asn271 and Asp280. Residue Asp280 coordinates ATP.

Belongs to the SELO family. Mg(2+) serves as cofactor. Mn(2+) is required as a cofactor.

It catalyses the reaction L-seryl-[protein] + ATP = 3-O-(5'-adenylyl)-L-seryl-[protein] + diphosphate. The catalysed reaction is L-threonyl-[protein] + ATP = 3-O-(5'-adenylyl)-L-threonyl-[protein] + diphosphate. The enzyme catalyses L-tyrosyl-[protein] + ATP = O-(5'-adenylyl)-L-tyrosyl-[protein] + diphosphate. It carries out the reaction L-histidyl-[protein] + UTP = N(tele)-(5'-uridylyl)-L-histidyl-[protein] + diphosphate. It catalyses the reaction L-seryl-[protein] + UTP = O-(5'-uridylyl)-L-seryl-[protein] + diphosphate. The catalysed reaction is L-tyrosyl-[protein] + UTP = O-(5'-uridylyl)-L-tyrosyl-[protein] + diphosphate. Nucleotidyltransferase involved in the post-translational modification of proteins. It can catalyze the addition of adenosine monophosphate (AMP) or uridine monophosphate (UMP) to a protein, resulting in modifications known as AMPylation and UMPylation. The protein is Protein nucleotidyltransferase YdiU of Xanthomonas axonopodis pv. citri (strain 306).